Consider the following 310-residue polypeptide: MPRIAYLGPEGTFTEAALLQMVAKGMVPGPAEDAGGFTPVRTDSTPGALSAVREGRADYACVPIENSIDGTVLPTLDSLAAGSPLQIYAELTLDVAFTIVVRPGHDGPVRTVAAFPVAAAQVRHWLAANLRDAEVVPAHSNAAAAHDVAEGRADAGVSTRLAAERCGLDIMAADVVDEPNARTRFVLVGLPGTPPPATGADRTAVVLRLVNEPGALVSAMTEFSIRDIDLTRIESRPTRTELGTYMFFLDCAGHIDDDPVAEALKALHRRCVDVRYLGSWPTESAAGAPPPRLDEATTWLEGLRAGSGGA.

The 188-residue stretch at 3–190 (RIAYLGPEGT…ARTRFVLVGL (188 aa)) folds into the Prephenate dehydratase domain. The region spanning 204 to 281 (AVVLRLVNEP…VDVRYLGSWP (78 aa)) is the ACT domain.

In terms of assembly, homodimer.

The catalysed reaction is prephenate + H(+) = 3-phenylpyruvate + CO2 + H2O. It functions in the pathway amino-acid biosynthesis; L-phenylalanine biosynthesis; phenylpyruvate from prephenate: step 1/1. This chain is Prephenate dehydratase (pheA), found in Mycolicibacterium smegmatis (strain ATCC 700084 / mc(2)155) (Mycobacterium smegmatis).